A 329-amino-acid chain; its full sequence is NADH-quinone oxidoreductase subunit H (329 aa).

The next 9 membrane-spanning stretches (helical) occupy residues 9–29, 42–62, 75–95, 117–137, 154–174, 188–208, 238–258, 260–280, and 309–329; these read LIKI…ATYI, GPCY…IKLF, FIFT…MAPI, IGFL…ILAG, IQLL…LMVV, GGFL…FLIA, LKWG…SFVI, IVFF…AILI, and WKIM…IILI.

The protein belongs to the complex I subunit 1 family. NDH-1 is composed of 14 different subunits. Subunits NuoA, H, J, K, L, M, N constitute the membrane sector of the complex.

The protein localises to the cell inner membrane. The catalysed reaction is a quinone + NADH + 5 H(+)(in) = a quinol + NAD(+) + 4 H(+)(out). Its function is as follows. NDH-1 shuttles electrons from NADH, via FMN and iron-sulfur (Fe-S) centers, to quinones in the respiratory chain. The immediate electron acceptor for the enzyme in this species is believed to be ubiquinone. Couples the redox reaction to proton translocation (for every two electrons transferred, four hydrogen ions are translocated across the cytoplasmic membrane), and thus conserves the redox energy in a proton gradient. This subunit may bind ubiquinone. In Helicobacter pylori (strain G27), this protein is NADH-quinone oxidoreductase subunit H.